The following is a 78-amino-acid chain: Translational regulator CsrA (78 aa).

Belongs to the CsrA/RsmA family. In terms of assembly, homodimer; the beta-strands of each monomer intercalate to form a hydrophobic core, while the alpha-helices form wings that extend away from the core.

The protein localises to the cytoplasm. Its function is as follows. A translational regulator that binds mRNA to regulate translation initiation and/or mRNA stability. Usually binds in the 5'-UTR at or near the Shine-Dalgarno sequence preventing ribosome-binding, thus repressing translation. Its main target seems to be the major flagellin gene, while its function is anatagonized by FliW. The polypeptide is Translational regulator CsrA (Borrelia recurrentis (strain A1)).